A 430-amino-acid chain; its full sequence is Tol-Pal system protein TolB (430 aa).

The signal sequence occupies residues 1–19 (MKKQIFFTLILLISGLARA).

It belongs to the TolB family. As to quaternary structure, the Tol-Pal system is composed of five core proteins: the inner membrane proteins TolA, TolQ and TolR, the periplasmic protein TolB and the outer membrane protein Pal. They form a network linking the inner and outer membranes and the peptidoglycan layer.

The protein resides in the periplasm. In terms of biological role, part of the Tol-Pal system, which plays a role in outer membrane invagination during cell division and is important for maintaining outer membrane integrity. This Hahella chejuensis (strain KCTC 2396) protein is Tol-Pal system protein TolB.